The chain runs to 201 residues: Probable molybdenum cofactor guanylyltransferase (201 aa).

Residues 16-18 (LAG), K28, D75, and D107 contribute to the GTP site. D107 serves as a coordination point for Mg(2+).

The protein belongs to the MobA family. Mg(2+) serves as cofactor.

Its subcellular location is the cytoplasm. It carries out the reaction Mo-molybdopterin + GTP + H(+) = Mo-molybdopterin guanine dinucleotide + diphosphate. Transfers a GMP moiety from GTP to Mo-molybdopterin (Mo-MPT) cofactor (Moco or molybdenum cofactor) to form Mo-molybdopterin guanine dinucleotide (Mo-MGD) cofactor. This is Probable molybdenum cofactor guanylyltransferase from Mycobacterium bovis (strain ATCC BAA-935 / AF2122/97).